A 1104-amino-acid chain; its full sequence is Valine--tRNA ligase, mitochondrial (1104 aa).

A mitochondrion-targeting transit peptide spans 1-47; sequence MNKWLNTLSKTFTFRLLNCHYRRSLPLCQNFSLKKSLTHNQVRFFKM. Ser-73 carries the post-translational modification Phosphoserine. The interval 99–119 is disordered; the sequence is KKNAAATTGASQKKPKKKKEV. A 'HIGH' region motif is present at residues 190–200; sequence PNVTGALHIGH. A phosphoserine mark is found at Ser-294 and Ser-332. The 'KMSKS' region motif lies at 703 to 707; the sequence is KMSKS. Residue Lys-706 participates in ATP binding. Ser-707 carries the post-translational modification Phosphoserine. A Phosphothreonine modification is found at Thr-1003.

It belongs to the class-I aminoacyl-tRNA synthetase family.

The protein resides in the cytoplasm. Its subcellular location is the mitochondrion. It catalyses the reaction tRNA(Val) + L-valine + ATP = L-valyl-tRNA(Val) + AMP + diphosphate. In Saccharomyces cerevisiae (strain ATCC 204508 / S288c) (Baker's yeast), this protein is Valine--tRNA ligase, mitochondrial (VAS1).